The chain runs to 237 residues: tRNA1(Val) (adenine(37)-N6)-methyltransferase (237 aa).

Belongs to the methyltransferase superfamily. tRNA (adenine-N(6)-)-methyltransferase family.

The protein localises to the cytoplasm. It carries out the reaction adenosine(37) in tRNA1(Val) + S-adenosyl-L-methionine = N(6)-methyladenosine(37) in tRNA1(Val) + S-adenosyl-L-homocysteine + H(+). Its function is as follows. Specifically methylates the adenine in position 37 of tRNA(1)(Val) (anticodon cmo5UAC). In Pasteurella multocida (strain Pm70), this protein is tRNA1(Val) (adenine(37)-N6)-methyltransferase.